Consider the following 86-residue polypeptide: Neurotoxin E1x (86 aa).

The first 19 residues, 1–19, serve as a signal peptide directing secretion; sequence MNSLLMITACLVVIGTVWA. The LCN-type CS-alpha/beta domain occupies 20–84; that stretch reads KEGYLVDVKG…TWPLPNKTCG (65 aa). Disulfide bonds link Cys30-Cys83, Cys34-Cys59, Cys43-Cys64, and Cys47-Cys66. Position 83 is a cysteine amide (Cys83).

This sequence belongs to the long (4 C-C) scorpion toxin superfamily. Sodium channel inhibitor family. Beta subfamily. As to expression, expressed by the venom gland.

It is found in the secreted. Functionally, binds to sodium channels (Nav) and inhibits the inactivation of the activated channels, thereby blocking neuronal transmission. The sequence is that of Neurotoxin E1x from Centruroides sculpturatus (Arizona bark scorpion).